Consider the following 217-residue polypeptide: 7-cyano-7-deazaguanine synthase (217 aa).

Residue 10–20 (FSGGQDSTTCL) coordinates ATP. Positions 185, 194, 197, and 200 each coordinate Zn(2+).

This sequence belongs to the QueC family. Homodimer. Zn(2+) serves as cofactor.

It catalyses the reaction 7-carboxy-7-deazaguanine + NH4(+) + ATP = 7-cyano-7-deazaguanine + ADP + phosphate + H2O + H(+). The protein operates within purine metabolism; 7-cyano-7-deazaguanine biosynthesis. Its function is as follows. Catalyzes the ATP-dependent conversion of 7-carboxy-7-deazaguanine (CDG) to 7-cyano-7-deazaguanine (preQ(0)). This Streptococcus thermophilus (strain ATCC BAA-491 / LMD-9) protein is 7-cyano-7-deazaguanine synthase.